Consider the following 176-residue polypeptide: NAD(P)H-quinone oxidoreductase subunit J (176 aa).

This sequence belongs to the complex I 30 kDa subunit family. In terms of assembly, NDH-1 can be composed of about 15 different subunits; different subcomplexes with different compositions have been identified which probably have different functions.

It is found in the cellular thylakoid membrane. It carries out the reaction a plastoquinone + NADH + (n+1) H(+)(in) = a plastoquinol + NAD(+) + n H(+)(out). The catalysed reaction is a plastoquinone + NADPH + (n+1) H(+)(in) = a plastoquinol + NADP(+) + n H(+)(out). In terms of biological role, NDH-1 shuttles electrons from an unknown electron donor, via FMN and iron-sulfur (Fe-S) centers, to quinones in the respiratory and/or the photosynthetic chain. The immediate electron acceptor for the enzyme in this species is believed to be plastoquinone. Couples the redox reaction to proton translocation, and thus conserves the redox energy in a proton gradient. Cyanobacterial NDH-1 also plays a role in inorganic carbon-concentration. The polypeptide is NAD(P)H-quinone oxidoreductase subunit J (Prochlorococcus marinus subsp. pastoris (strain CCMP1986 / NIES-2087 / MED4)).